Consider the following 165-residue polypeptide: Putative pre-16S rRNA nuclease (165 aa).

It belongs to the YqgF nuclease family.

Its subcellular location is the cytoplasm. Functionally, could be a nuclease involved in processing of the 5'-end of pre-16S rRNA. The protein is Putative pre-16S rRNA nuclease of Beijerinckia indica subsp. indica (strain ATCC 9039 / DSM 1715 / NCIMB 8712).